The sequence spans 274 residues: Pyridoxal phosphate homeostasis protein (274 aa).

S6 is modified (phosphoserine). K47 carries the N6-(pyridoxal phosphate)lysine modification. A Phosphotyrosine modification is found at Y69. K125 carries the N6-succinyllysine modification. Residues S226 and S244 each carry the phosphoserine modification.

It belongs to the pyridoxal phosphate-binding protein YggS/PROSC family.

In terms of biological role, pyridoxal 5'-phosphate (PLP)-binding protein, which may be involved in intracellular homeostatic regulation of pyridoxal 5'-phosphate (PLP), the active form of vitamin B6. The protein is Pyridoxal phosphate homeostasis protein of Mus musculus (Mouse).